The primary structure comprises 361 residues: UDP-N-acetylglucosamine--N-acetylmuramyl-(pentapeptide) pyrophosphoryl-undecaprenol N-acetylglucosamine transferase (361 aa).

Residues 13–15, N125, R167, S196, I251, 270–275, and Q296 each bind UDP-N-acetyl-alpha-D-glucosamine; these read TGG and ALTVTE.

Belongs to the glycosyltransferase 28 family. MurG subfamily.

It is found in the cell inner membrane. It catalyses the reaction di-trans,octa-cis-undecaprenyl diphospho-N-acetyl-alpha-D-muramoyl-L-alanyl-D-glutamyl-meso-2,6-diaminopimeloyl-D-alanyl-D-alanine + UDP-N-acetyl-alpha-D-glucosamine = di-trans,octa-cis-undecaprenyl diphospho-[N-acetyl-alpha-D-glucosaminyl-(1-&gt;4)]-N-acetyl-alpha-D-muramoyl-L-alanyl-D-glutamyl-meso-2,6-diaminopimeloyl-D-alanyl-D-alanine + UDP + H(+). It functions in the pathway cell wall biogenesis; peptidoglycan biosynthesis. Cell wall formation. Catalyzes the transfer of a GlcNAc subunit on undecaprenyl-pyrophosphoryl-MurNAc-pentapeptide (lipid intermediate I) to form undecaprenyl-pyrophosphoryl-MurNAc-(pentapeptide)GlcNAc (lipid intermediate II). The protein is UDP-N-acetylglucosamine--N-acetylmuramyl-(pentapeptide) pyrophosphoryl-undecaprenol N-acetylglucosamine transferase of Psychrobacter arcticus (strain DSM 17307 / VKM B-2377 / 273-4).